Consider the following 491-residue polypeptide: F-box/LRR-repeat protein 7 (491 aa).

The segment at 1 to 79 (MGANNGKQYG…GRGSSTSSSS (79 aa)) is disordered. The span at 10–26 (GSEGKGSSSISSDVSSS) shows a compositional bias: low complexity. Residues 27–55 (TDHTPTKAQKNVATSEDSDLSMRTLSTPS) are compositionally biased toward polar residues. In terms of domain architecture, F-box spans 111 to 157 (QASIDRLPDHSMVQIFSFLPTNQLCRCARVCRRWYNLAWDPRLWRTI). LRR repeat units follow at residues 170-195 (LKVL…TVSG), 196-221 (CRRL…EVSG), 222-247 (CYNI…DVSG), 253-281 (CISL…DMTD), 282-307 (CFVL…YLRR), 308-333 (CVRL…SVSD), 334-359 (CRFV…SIAH), 360-385 (CGRV…NARG), 386-411 (CEGI…DIGK), 412-437 (CPLV…SLKS), and 438-463 (CESI…NVQD).

It belongs to the FBXL7 family. As to quaternary structure, part of the SCF (SKP1-CUL1-F-box) E3 ubiquitin-protein ligase complex SCF(FBXL7) composed of CUL1, SKP1, RBX1 and FBXL7. Interacts with AURKA; interaction takes place during mitosis but not in interphase. Interacts with BIRC5; this interaction allows BIRC5 to be polyubiquitinated by the SCF(FBXL7) E3 ubiquitin-protein ligase complex.

Its subcellular location is the cytoplasm. The protein resides in the cytoskeleton. It is found in the microtubule organizing center. The protein localises to the centrosome. It participates in protein modification; protein ubiquitination. Functionally, substrate recognition component of a SCF (SKP1-CUL1-F-box protein) E3 ubiquitin-protein ligase complex. During mitosis, it mediates the ubiquitination and subsequent proteasomal degradation of AURKA, causing mitotic arrest. It also regulates mitochondrial function by mediating the ubiquitination and proteasomal degradation of the apoptosis inhibitor BIRC5. The sequence is that of F-box/LRR-repeat protein 7 (FBXL7) from Homo sapiens (Human).